The sequence spans 163 residues: Nucleotide-binding protein Cla_1551 (163 aa).

It belongs to the YajQ family.

Nucleotide-binding protein. In Campylobacter lari (strain RM2100 / D67 / ATCC BAA-1060), this protein is Nucleotide-binding protein Cla_1551.